The primary structure comprises 33 residues: SLFSLIKAGAKFLGKNLLKQGAQYAACKVSKEC.

Cys27 and Cys33 are joined by a disulfide.

It belongs to the frog skin active peptide (FSAP) family. Brevinin subfamily. In terms of tissue distribution, expressed by the skin glands.

It is found in the secreted. Its function is as follows. Shows antibacterial activity against both Gram-negative and Gram-positive bacteria. The chain is Rugosin-B from Glandirana rugosa (Japanese wrinkled frog).